The following is a 289-amino-acid chain: Elongation factor Ts (289 aa).

Residues 82–85 (TDFL) form an involved in Mg(2+) ion dislocation from EF-Tu region.

This sequence belongs to the EF-Ts family.

The protein resides in the cytoplasm. Functionally, associates with the EF-Tu.GDP complex and induces the exchange of GDP to GTP. It remains bound to the aminoacyl-tRNA.EF-Tu.GTP complex up to the GTP hydrolysis stage on the ribosome. The polypeptide is Elongation factor Ts (Pseudomonas paraeruginosa (strain DSM 24068 / PA7) (Pseudomonas aeruginosa (strain PA7))).